A 280-amino-acid polypeptide reads, in one-letter code: Nocamycin O-methyltransferase (280 aa).

Belongs to the methyltransferase superfamily.

The catalysed reaction is nocamycin E + S-adenosyl-L-methionine = nocamycin I + S-adenosyl-L-homocysteine. It functions in the pathway antibiotic biosynthesis. Its function is as follows. Involved in the biosynthesis of nocamycin I and nocamycin II. Catalyzes the methylation of nocamycin E to yield nocamycin I. This Saccharothrix syringae (Nocardiopsis syringae) protein is Nocamycin O-methyltransferase.